A 228-amino-acid chain; its full sequence is Elongation factor 1-beta 1 (228 aa).

Position 2 is an N-acetylalanine (alanine 2). The region spanning 14 to 65 (LKTLEEHLAGKTYISGDQLSVDDVKVYAAVLENPGDGFPNASKWYDSVASHL) is the GST C-terminal domain. The disordered stretch occupies residues 75–139 (GVRVGGGVAP…DTKKTKESGK (65 aa)). Positions 95–115 (PAADGDGDDDDDIDLFADETE) are enriched in acidic residues. Residues 116–138 (DEKKAAEEREAAKKDTKKTKESG) are compositionally biased toward basic and acidic residues.

It belongs to the EF-1-beta/EF-1-delta family. As to quaternary structure, EF-1 is composed of 4 subunits: alpha, beta (1B-alpha=beta'), delta (1B-beta), and gamma (1B-gamma).

The protein localises to the cell membrane. In terms of biological role, EF-1-beta and EF-1-delta stimulate the exchange of GDP bound to EF-1-alpha to GTP. This is Elongation factor 1-beta 1 from Arabidopsis thaliana (Mouse-ear cress).